A 563-amino-acid polypeptide reads, in one-letter code: Putative cytochrome c oxidase subunit 1-beta (563 aa).

The next 7 helical transmembrane spans lie at 34–54 (IGHL…VMAL), 76–96 (LFTL…FAGF), 117–137 (MLSY…LAVP), 164–184 (MWIM…VNFL), 208–228 (LFTS…LLVL), 252–272 (LFWF…FGII), and 284–304 (IFGY…SVVV). Position 80 (His-80) interacts with Fe(II)-heme a. Positions 258 and 262 each coordinate Cu cation. Positions 258-262 (HPEVY) form a cross-link, 1'-histidyl-3'-tyrosine (His-Tyr). His-307 and His-308 together coordinate Cu cation. 2 helical membrane passes run 309 to 329 (MFAT…LIAV) and 353 to 373 (MLWA…GVIL). A heme a3-binding site is contributed by His-391. The next 3 helical transmembrane spans lie at 392–412 (FHYV…YFWW), 427–447 (IHFW…HWLG), and 470–490 (LSTI…YNVW). His-393 contributes to the Fe(II)-heme a binding site. The tract at residues 536-563 (AFDLHHPAHAGEAPQPEPKHEQADREPS) is disordered. Residues 552–563 (EPKHEQADREPS) are compositionally biased toward basic and acidic residues.

It belongs to the heme-copper respiratory oxidase family. As to quaternary structure, associates with subunits II, III and IV to form cytochrome c oxidase. Cu(2+) serves as cofactor. Heme is required as a cofactor.

Its subcellular location is the cell membrane. The enzyme catalyses 4 Fe(II)-[cytochrome c] + O2 + 8 H(+)(in) = 4 Fe(III)-[cytochrome c] + 2 H2O + 4 H(+)(out). It functions in the pathway energy metabolism; oxidative phosphorylation. Cytochrome c oxidase is the component of the respiratory chain that catalyzes the reduction of oxygen to water. Subunits 1-3 form the functional core of the enzyme complex. CO I is the catalytic subunit of the enzyme. Electrons originating in cytochrome c are transferred via the copper A center of subunit 2 and heme A of subunit 1 to the bimetallic center formed by heme A3 and copper B. The polypeptide is Putative cytochrome c oxidase subunit 1-beta (ctaD2) (Streptomyces avermitilis (strain ATCC 31267 / DSM 46492 / JCM 5070 / NBRC 14893 / NCIMB 12804 / NRRL 8165 / MA-4680)).